The chain runs to 226 residues: 7-cyano-7-deazaguanine synthase (226 aa).

ATP is bound at residue 9–19 (LSGGLDSTVAT). Residues C192, C200, C203, and C206 each contribute to the Zn(2+) site.

It belongs to the QueC family. The cofactor is Zn(2+).

It carries out the reaction 7-carboxy-7-deazaguanine + NH4(+) + ATP = 7-cyano-7-deazaguanine + ADP + phosphate + H2O + H(+). It participates in purine metabolism; 7-cyano-7-deazaguanine biosynthesis. In terms of biological role, catalyzes the ATP-dependent conversion of 7-carboxy-7-deazaguanine (CDG) to 7-cyano-7-deazaguanine (preQ(0)). This is 7-cyano-7-deazaguanine synthase from Methanosphaera stadtmanae (strain ATCC 43021 / DSM 3091 / JCM 11832 / MCB-3).